The sequence spans 295 residues: Protease HtpX (295 aa).

Transmembrane regions (helical) follow at residues 4–24 (ILLFLATNLAVVLIASITLSL) and 42–62 (QLLVFCAVFGFAGSLFSLFIS). His147 is a Zn(2+) binding site. Glu148 is an active-site residue. A Zn(2+)-binding site is contributed by His151. The next 2 membrane-spanning stretches (helical) occupy residues 158–178 (VTLALVQGVVNTFVMFFARII) and 199–219 (ITTIFAELVLGFLASAIVMWF). Zn(2+) is bound at residue Glu224.

This sequence belongs to the peptidase M48B family. Requires Zn(2+) as cofactor.

It is found in the cell inner membrane. In Pseudomonas syringae pv. tomato (strain ATCC BAA-871 / DC3000), this protein is Protease HtpX.